We begin with the raw amino-acid sequence, 333 residues long: T-cell surface glycoprotein CD1b-2 (333 aa).

The N-terminal stretch at 1–20 (MLLLPLLLLGVILPGGDNED) is a signal peptide. Over 21–302 (VFQGPTSFHL…LYWGHPTSIG (282 aa)) the chain is Extracellular. Residues N38, N75, and N146 are each glycosylated (N-linked (GlcNAc...) asparagine). 3 cysteine pairs are disulfide-bonded: C120/C184, C149/C163, and C224/C279. The 111-residue stretch at 185–295 (PRYLLGVLDA…LGDQDIILYW (111 aa)) folds into the Ig-like domain. Residues 303–323 (LILVAIIVPSLILSICLALWF) form a helical membrane-spanning segment. The Cytoplasmic portion of the chain corresponds to 324 to 333 (WRRWSYQNIL). The Internalization signal signature appears at 329–332 (YQNI).

As to quaternary structure, heterodimer with B2M (beta-2-microglobulin). Interacts with saposin C.

It localises to the cell membrane. It is found in the endosome membrane. The protein localises to the lysosome membrane. Antigen-presenting protein that binds self and non-self lipid and glycolipid antigens and presents them to T-cell receptors on natural killer T-cells. The sequence is that of T-cell surface glycoprotein CD1b-2 from Ovis aries (Sheep).